The sequence spans 481 residues: Zinc metalloproteinase/disintegrin (481 aa).

The first 20 residues, 1–20 (MIEVLLVTICLAVFPYQGSS), serve as a signal peptide directing secretion. Residues 21–189 (IILESGNVND…KKASQLYLTP (169 aa)) constitute a propeptide that is removed on maturation. Pyrrolidone carboxylic acid (Glu) is present on Glu190. The Peptidase M12B domain maps to 197–392 (RYIKLAIVVD…DNPQCILNAP (196 aa)). An L-amino acid tripeptide is bound at residue 296–299 (RNTI). 3 disulfides stabilise this stretch: Cys308–Cys387, Cys349–Cys371, and Cys351–Cys354. A Zn(2+)-binding site is contributed by His333. The active site involves Glu334. 2 residues coordinate Zn(2+): His337 and His343. Residue Ser357 participates in an L-amino acid tripeptide binding. The propeptide occupies 393–410 (LRTDTVSTPVSGNEFLEA). The Disintegrin domain maps to 400-481 (TPVSGNEFLE…ADCPRNGLYG (82 aa)). Intrachain disulfides connect Cys414–Cys429, Cys416–Cys424, Cys423–Cys446, Cys437–Cys443, Cys442–Cys467, and Cys455–Cys474. Positions 459 to 461 (RGD) match the Cell attachment site motif.

This sequence belongs to the venom metalloproteinase (M12B) family. P-II subfamily. P-IIa sub-subfamily. Monomer. Zn(2+) serves as cofactor. The N-terminus is blocked. Expressed by the venom gland.

Its subcellular location is the secreted. Inhibited by EDTA and 1,10-phenanthroline. Is also inhibited by endogenous tripeptide inhibitors pyroGlu-Asn-Trp, pyroGlu-Gln-Trp, and pyroGlu-Lys-Trp. In terms of biological role, potent fibrinogenolytic protease which cleaves mainly the Aalpha chain of fibrinogen (FGA) and slightly the Bbeta (FGB) and the gamma (FGG) chains. May possess hemorrhagic activity. Compared to other SVMP, the substrate-binding pocket is relatively shallow. Is less susceptible to tripeptide inhibitors than TM-1 (AC U3KRG1) and TM-2. Inhibits platelet aggregation induced by ADP, thrombin, platelet-activating factor and collagen. Acts by inhibiting fibrinogen interaction with platelet receptors GPIIb/GPIIIa (ITGA2B/ITGB3). In Protobothrops mucrosquamatus (Taiwan habu), this protein is Zinc metalloproteinase/disintegrin.